Consider the following 111-residue polypeptide: Exocrine gland-secreted peptide 22 (111 aa).

A signal peptide spans 1-24 (MNSVPVMLFSISILLAAMLTEGRG).

It belongs to the exocrine gland-secreted peptide family. As to expression, expressed in acinar cells of the lacrimal gland from where it is secreted into tears. Not detected in a range of other tissues tested including other exocrine glands, internal organs and sensory epithelia.

It localises to the secreted. Its function is as follows. Pheromone produced by juveniles which activates a small number of vomeronasal organ sensory neurons and exhibits a powerful inhibitory effect on adult male mating behavior. This chain is Exocrine gland-secreted peptide 22, found in Mus musculus (Mouse).